We begin with the raw amino-acid sequence, 643 residues long: Threonine--tRNA ligase (643 aa).

The TGS domain maps to Met1 to Thr61. The interval Asp243 to Pro534 is catalytic. Residues Cys334, His385, and His511 each coordinate Zn(2+).

Belongs to the class-II aminoacyl-tRNA synthetase family. In terms of assembly, homodimer. It depends on Zn(2+) as a cofactor.

Its subcellular location is the cytoplasm. It carries out the reaction tRNA(Thr) + L-threonine + ATP = L-threonyl-tRNA(Thr) + AMP + diphosphate + H(+). Its function is as follows. Catalyzes the attachment of threonine to tRNA(Thr) in a two-step reaction: L-threonine is first activated by ATP to form Thr-AMP and then transferred to the acceptor end of tRNA(Thr). Also edits incorrectly charged L-seryl-tRNA(Thr). This Rhodospirillum rubrum (strain ATCC 11170 / ATH 1.1.1 / DSM 467 / LMG 4362 / NCIMB 8255 / S1) protein is Threonine--tRNA ligase.